The chain runs to 208 residues: MTEKDESVKSNSEYTEEQEVKNEDTSTVENVEDTTSDSDNSSNDSSNEESSEETAVDPKDEEIQQLQLKANENEEKYLRLYAEFENYKRRIQKENETNKTYQSQRVLTDILPTIDNIERALQIEGDDESFKSLQKGVQMVHESLLRALKDNGLEEIESEGQAFDPNFHQAVVQDDNPDFKSGDITQELQKGYKLKDRVLRPSMVKVNQ.

The disordered stretch occupies residues 1–62; the sequence is MTEKDESVKS…ETAVDPKDEE (62 aa). Residues 46–55 show a composition bias toward acidic residues; the sequence is SNEESSEETA.

This sequence belongs to the GrpE family. As to quaternary structure, homodimer.

It localises to the cytoplasm. Participates actively in the response to hyperosmotic and heat shock by preventing the aggregation of stress-denatured proteins, in association with DnaK and GrpE. It is the nucleotide exchange factor for DnaK and may function as a thermosensor. Unfolded proteins bind initially to DnaJ; upon interaction with the DnaJ-bound protein, DnaK hydrolyzes its bound ATP, resulting in the formation of a stable complex. GrpE releases ADP from DnaK; ATP binding to DnaK triggers the release of the substrate protein, thus completing the reaction cycle. Several rounds of ATP-dependent interactions between DnaJ, DnaK and GrpE are required for fully efficient folding. The sequence is that of Protein GrpE from Staphylococcus haemolyticus (strain JCSC1435).